A 346-amino-acid polypeptide reads, in one-letter code: tRNA N6-adenosine threonylcarbamoyltransferase (346 aa).

H111 and H115 together coordinate Fe cation. Residues 134-138, D167, G180, D184, and N279 contribute to the substrate site; that span reads LVSGG. Position 307 (D307) interacts with Fe cation.

It belongs to the KAE1 / TsaD family. Fe(2+) is required as a cofactor.

It is found in the cytoplasm. The enzyme catalyses L-threonylcarbamoyladenylate + adenosine(37) in tRNA = N(6)-L-threonylcarbamoyladenosine(37) in tRNA + AMP + H(+). Required for the formation of a threonylcarbamoyl group on adenosine at position 37 (t(6)A37) in tRNAs that read codons beginning with adenine. Is involved in the transfer of the threonylcarbamoyl moiety of threonylcarbamoyl-AMP (TC-AMP) to the N6 group of A37, together with TsaE and TsaB. TsaD likely plays a direct catalytic role in this reaction. The sequence is that of tRNA N6-adenosine threonylcarbamoyltransferase from Gloeothece citriformis (strain PCC 7424) (Cyanothece sp. (strain PCC 7424)).